Here is a 156-residue protein sequence, read N- to C-terminus: Succinate dehydrogenase assembly factor 2-B, mitochondrial (156 aa).

Residues 1 to 24 (MLRQFIVSTVGRRLQLPMMAQSRL) constitute a mitochondrion transit peptide.

It belongs to the SDHAF2 family. In terms of assembly, interacts with the flavoprotein subunit within the SDH catalytic dimer.

It localises to the mitochondrion matrix. In terms of biological role, plays an essential role in the assembly of succinate dehydrogenase (SDH), an enzyme complex (also referred to as respiratory complex II) that is a component of both the tricarboxylic acid (TCA) cycle and the mitochondrial electron transport chain, and which couples the oxidation of succinate to fumarate with the reduction of ubiquinone (coenzyme Q) to ubiquinol. Required for flavinylation (covalent attachment of FAD) of the flavoprotein subunit of the SDH catalytic dimer. The sequence is that of Succinate dehydrogenase assembly factor 2-B, mitochondrial from Drosophila melanogaster (Fruit fly).